A 297-amino-acid chain; its full sequence is MRPELSQYTHVSAGKVREIYEVDDERLLMVVSDRISAYDHILEPEIPDKGRVLTAMSMYFFHNIDFPNHLAGPIDDPAIPEEVLGRAMVCKKLKMLPFECVARGYLTGSGLKEYQETGTVCGVELPEGLVEASKLPEPIFTPATKAELGDHDENVSFDVVVEKLGEARANELRDATLRIYSEAAALAEERGIILADTKFEFGLDEDGRLVLADEVLTPDSSRYWPADGYEEGKVQPSFDKQYVRNWLTGPKSGWSTDDVTPPPSLPGSVVEATRERYVEAFERITGKKFCEWIGCCV.

This sequence belongs to the SAICAR synthetase family.

The catalysed reaction is 5-amino-1-(5-phospho-D-ribosyl)imidazole-4-carboxylate + L-aspartate + ATP = (2S)-2-[5-amino-1-(5-phospho-beta-D-ribosyl)imidazole-4-carboxamido]succinate + ADP + phosphate + 2 H(+). It participates in purine metabolism; IMP biosynthesis via de novo pathway; 5-amino-1-(5-phospho-D-ribosyl)imidazole-4-carboxamide from 5-amino-1-(5-phospho-D-ribosyl)imidazole-4-carboxylate: step 1/2. The chain is Phosphoribosylaminoimidazole-succinocarboxamide synthase from Corynebacterium diphtheriae (strain ATCC 700971 / NCTC 13129 / Biotype gravis).